An 808-amino-acid polypeptide reads, in one-letter code: Leucine--tRNA ligase (808 aa).

Residues 40–51 (PYPSGQGLHVGH) carry the 'HIGH' region motif. The short motif at 580 to 584 (KMSKS) is the 'KMSKS' region element. Lysine 583 is a binding site for ATP.

This sequence belongs to the class-I aminoacyl-tRNA synthetase family.

Its subcellular location is the cytoplasm. It carries out the reaction tRNA(Leu) + L-leucine + ATP = L-leucyl-tRNA(Leu) + AMP + diphosphate. This is Leucine--tRNA ligase from Leuconostoc mesenteroides subsp. mesenteroides (strain ATCC 8293 / DSM 20343 / BCRC 11652 / CCM 1803 / JCM 6124 / NCDO 523 / NBRC 100496 / NCIMB 8023 / NCTC 12954 / NRRL B-1118 / 37Y).